Reading from the N-terminus, the 40-residue chain is uncharacterized protein (40 aa).

This is an uncharacterized protein from Acheta domesticus (House cricket).